We begin with the raw amino-acid sequence, 1135 residues long: Envelopment polyprotein (1135 aa).

An N-terminal signal peptide occupies residues 1–35 (MRILKLLELVVKVSLFTIALSSVLLAFLTFRATDA). At 36 to 314 (KVEIIRGDHP…KYSKSIYKQT (279 aa)) the chain is on the lumenal side. Residues 41–43 (RGD) carry the Cell attachment site motif. N-linked (GlcNAc...) asparagine; by host glycosylation occurs at Asn-116. Cys-122 and Cys-156 are disulfide-bonded. Residues 177-195 (LDNKRHFSVGTNFFIPESL) form a non-covalent dimerization region. Asn-210 is a glycosylation site (N-linked (GlcNAc...) asparagine; by host). An intrachain disulfide couples Cys-224 to Cys-285. A helical membrane pass occupies residues 315-366 (ACINFSWIRLILIALLIYFPIRWLVNKTTKPLFLWYDLMGLITYPVLLLINC). Residues 367–484 (LWKYFPFKCS…VPGCPFLVTS (118 aa)) lie on the Cytoplasmic side of the membrane. The segment at 437 to 484 (LSLSLLKFVTEILIGLVILSQIPMSMAQTTQCLSGCFYVPGCPFLVTS) is signal for signal peptide peptidase. Over 485–1067 (KFEKCPEKDQ…YFGSFFDTIR (583 aa)) the chain is Lumenal. N-linked (GlcNAc...) asparagine; by host glycans are attached at residues Asn-588, Asn-605, and Asn-980. Residues 1068–1088 (VVLLIAFIFLVIYFCSILTSI) form a helical membrane-spanning segment. Topologically, residues 1089 to 1135 (CKGYVKHKSYKSRSKIEDDDEPEIKAPMLMKDTMTRRRPPMDFSHLV) are cytoplasmic.

Belongs to the tospovirus envelope glycoprotein family. As to quaternary structure, homodimer; disulfide-linked. Heterodimer with Glycoprotein C. Interacts with nucleoprotein. Heterodimer with Glycoprotein N. Interacts with nucleoprotein. Specific enzymatic cleavages in vivo yield mature proteins including Glycoprotein N and Glycoprotein C. In terms of processing, glycosylated with O-linked glycans. Glycosylation is essential for proper subcellular location. Post-translationally, cleaved at acidic pH.

It localises to the virion membrane. Its subcellular location is the host Golgi apparatus membrane. The protein resides in the host endoplasmic reticulum membrane. Forms the spikes present at the surface of the virion together with Glycoprotein C. They are able to attach the virion to a cell receptor and to promote fusion of membranes after endocytosis of the virion. Plays a role in virus binding and/or entry into the vector midgut. Functionally, forms the spikes present at the surface of the virion together with Glycoprotein N. They are able to attach the virion to a cell receptor and to promote fusion of membranes after endocytosis of the virion. Probable class II fusion protein. This chain is Envelopment polyprotein (GP), found in Frankliniella occidentalis (Western flower thrips).